We begin with the raw amino-acid sequence, 203 residues long: Glycerol-3-phosphate acyltransferase (203 aa).

4 consecutive transmembrane segments (helical) span residues methionine 4–isoleucine 24, proline 80–phenylalanine 100, proline 117–phenylalanine 137, and tyrosine 139–lysine 159.

Belongs to the PlsY family. As to quaternary structure, probably interacts with PlsX.

The protein localises to the cell inner membrane. It catalyses the reaction an acyl phosphate + sn-glycerol 3-phosphate = a 1-acyl-sn-glycero-3-phosphate + phosphate. Its pathway is lipid metabolism; phospholipid metabolism. In terms of biological role, catalyzes the transfer of an acyl group from acyl-phosphate (acyl-PO(4)) to glycerol-3-phosphate (G3P) to form lysophosphatidic acid (LPA). This enzyme utilizes acyl-phosphate as fatty acyl donor, but not acyl-CoA or acyl-ACP. This is Glycerol-3-phosphate acyltransferase from Vibrio vulnificus (strain YJ016).